The following is a 77-amino-acid chain: Thioredoxin (77 aa).

Active-site nucleophile residues include Cys-11 and Cys-14. A disulfide bridge links Cys-11 with Cys-14.

It belongs to the glutaredoxin family.

Does not function as a glutathione-disulfide oxidoreductase in the presence of glutathione and glutathione reductase. Has low thioredoxin activity in vitro. The protein is Thioredoxin of Methanothermobacter thermautotrophicus (strain ATCC 29096 / DSM 1053 / JCM 10044 / NBRC 100330 / Delta H) (Methanobacterium thermoautotrophicum).